The sequence spans 364 residues: tRNA-specific 2-thiouridylase MnmA 1 (364 aa).

ATP-binding positions include 11–18 (GMSGGTDS) and Phe37. The active-site Nucleophile is the Cys96. The cysteines at positions 96 and 193 are disulfide-linked. Gly120 serves as a coordination point for ATP. Positions 142–144 (KDQ) are interaction with tRNA. Cys193 acts as the Cysteine persulfide intermediate in catalysis. An interaction with tRNA region spans residues 309 to 310 (RY).

This sequence belongs to the MnmA/TRMU family.

It is found in the cytoplasm. It catalyses the reaction S-sulfanyl-L-cysteinyl-[protein] + uridine(34) in tRNA + AH2 + ATP = 2-thiouridine(34) in tRNA + L-cysteinyl-[protein] + A + AMP + diphosphate + H(+). Functionally, catalyzes the 2-thiolation of uridine at the wobble position (U34) of tRNA, leading to the formation of s(2)U34. The protein is tRNA-specific 2-thiouridylase MnmA 1 of Bacteroides fragilis (strain YCH46).